Reading from the N-terminus, the 84-residue chain is Small ribosomal subunit protein uS15 (84 aa).

It belongs to the universal ribosomal protein uS15 family. Part of the 30S ribosomal subunit. Forms a bridge to the 50S subunit in the 70S ribosome, contacting the 23S rRNA.

In terms of biological role, one of the primary rRNA binding proteins, it binds directly to 16S rRNA where it helps nucleate assembly of the platform of the 30S subunit by binding and bridging several RNA helices of the 16S rRNA. Its function is as follows. Forms an intersubunit bridge (bridge B4) with the 23S rRNA of the 50S subunit in the ribosome. The protein is Small ribosomal subunit protein uS15 of Akkermansia muciniphila (strain ATCC BAA-835 / DSM 22959 / JCM 33894 / BCRC 81048 / CCUG 64013 / CIP 107961 / Muc).